Reading from the N-terminus, the 200-residue chain is Rho GDP-dissociation inhibitor 2 (200 aa).

Residues 1–40 (MTEKAPEPHVEEDDDELDGKLNYKPPPQKSLKELQEMDKD) form a disordered region. Thr-2 bears the N-acetylthreonine mark. Lys-20 is modified (N6-acetyllysine). Tyr-23 carries the post-translational modification Phosphotyrosine. 5 positions are modified to N6-acetyllysine: Lys-24, Lys-39, Lys-46, Lys-101, and Lys-123. Positions 30–40 (SLKELQEMDKD) are enriched in basic and acidic residues. Ser-144 is subject to Phosphoserine. At Lys-174 the chain carries N6-acetyllysine.

This sequence belongs to the Rho GDI family. As to quaternary structure, interacts with RHOA. Interacts with RAC1. Interacts with RAC2. Interacts with CDC42.

The protein resides in the cytoplasm. Its subcellular location is the cytosol. Regulates the GDP/GTP exchange reaction of the Rho proteins by inhibiting the dissociation of GDP from them, and the subsequent binding of GTP to them. Regulates reorganization of the actin cytoskeleton mediated by Rho family members. This Bos taurus (Bovine) protein is Rho GDP-dissociation inhibitor 2 (ARHGDIB).